We begin with the raw amino-acid sequence, 579 residues long: Deleted in azoospermia protein 4 (579 aa).

Positions 1–10 are enriched in polar residues; sequence MSAANPETPN. Residues 1–27 form a disordered region; it reads MSAANPETPNSTISREASTQSSSAAAS. The span at 11–27 shows a compositional bias: low complexity; that stretch reads STISREASTQSSSAAAS. Positions 40 to 115 constitute an RRM 1 domain; sequence NTVFVGGIDA…KKLKLGPAIR (76 aa). Over residues 163-175 the composition is skewed to polar residues; it reads QHVQSAANPETPN. The segment at 163–192 is disordered; sequence QHVQSAANPETPNSTISREASTQSSSAAAS. The segment covering 176 to 192 has biased composition (low complexity); the sequence is STISREASTQSSSAAAS. One can recognise an RRM 2 domain in the interval 205 to 280; it reads NTVFVGGIDA…KKLKLGPAIR (76 aa). DAZ domains are found at residues 332 to 355, 356 to 379, 380 to 403, 404 to 427, 428 to 451, 452 to 475, 476 to 499, 500 to 523, and 524 to 547; these read AYSAYPHSPGQVITGCQLLVYNYQ, EYPTYPDSAFQVTTGYQLPVYNYQ, PFPAYPRSPFQVTAGYQLPVYNYQ, AFPAYPNSPFQVATGYQFPVYNYQ, PFPAYPSSPFQVTAGYQLPVYNYQ, AFPAYPNSPVQVTTGYQLPVYNYQ, AFPAYPSSPFQVTTGYQLPVYNYQ, and AFPAYPNSAVQVTTGYQFHVYNYQ.

The protein belongs to the RRM DAZ family. In terms of assembly, forms a heterodimer with BOLL and DAZL. Interacts with PUM2, DAZAP1, DAZAP2, DZIP1 and DZIP3. In terms of tissue distribution, testis-specific. Expression restricted to premeiotic germ cells, particularly in spermatogonia (at protein level).

The protein resides in the cytoplasm. It is found in the nucleus. In terms of biological role, RNA-binding protein that plays an essential role in spermatogenesis. May act by binding to the 3'-UTR of mRNAs and regulating their translation. In Homo sapiens (Human), this protein is Deleted in azoospermia protein 4 (DAZ4).